The sequence spans 94 residues: MICOS complex subunit MIC12 (94 aa).

The chain crosses the membrane as a helical span at residues 7–23 (YGSFSVVASVLGASYYY).

It belongs to the MICOS complex subunit Mic12 family. As to quaternary structure, component of the mitochondrial contact site and cristae organizing system (MICOS) complex.

The protein localises to the mitochondrion inner membrane. Its function is as follows. Component of the MICOS complex, a large protein complex of the mitochondrial inner membrane that plays crucial roles in the maintenance of crista junctions, inner membrane architecture, and formation of contact sites to the outer membrane. This is MICOS complex subunit MIC12 (AIM5) from Eremothecium gossypii (strain ATCC 10895 / CBS 109.51 / FGSC 9923 / NRRL Y-1056) (Yeast).